A 220-amino-acid polypeptide reads, in one-letter code: Guanylate kinase (220 aa).

The Guanylate kinase-like domain maps to 16–195; it reads GLMFVLSSPS…AFESVKAILR (180 aa). 23–30 contributes to the ATP binding site; sequence SPSGAGKT.

It belongs to the guanylate kinase family.

The protein resides in the cytoplasm. The enzyme catalyses GMP + ATP = GDP + ADP. Essential for recycling GMP and indirectly, cGMP. In Rhodopseudomonas palustris (strain HaA2), this protein is Guanylate kinase.